The chain runs to 378 residues: Beta-1,3-N-acetylglucosaminyltransferase lunatic fringe (378 aa).

At 1–8 (MLQRCGRR) the chain is on the cytoplasmic side. The chain crosses the membrane as a helical; Signal-anchor for type II membrane protein span at residues 9-29 (LLLALVGALLACLLVLTADPP). The Lumenal portion of the chain corresponds to 30 to 378 (PTPMPAERGR…TPWCPRSAIF (349 aa)). A disordered region spans residues 85–108 (RDADPPPGVASRQGDGHPRPPAEV). Residue R128 participates in substrate binding. N-linked (GlcNAc...) asparagine glycosylation is present at N166. Intrachain disulfides connect C167–C178 and C196–C259. Residue D200 coordinates substrate. Position 201 (D201) interacts with Mn(2+). D289 is a catalytic residue. H313 lines the Mn(2+) pocket. C363 and C372 are joined by a disulfide.

Belongs to the glycosyltransferase 31 family. Mn(2+) is required as a cofactor. Co(2+) serves as cofactor. In terms of processing, a soluble form may be derived from the membrane form by proteolytic processing. Detected at 12.5 dpc in all tissues examined with the highest level observed in adult brain and spleen. Detected in the dental epithelium.

It is found in the golgi apparatus. The protein resides in the golgi apparatus membrane. The enzyme catalyses 3-O-(alpha-L-fucosyl)-L-threonyl-[EGF-like domain protein] + UDP-N-acetyl-alpha-D-glucosamine = 3-O-(N-acetyl-beta-D-glucosaminyl-(1-&gt;3)-alpha-L-fucosyl)-L-threonyl-[EGF-like domain protein] + UDP + H(+). The catalysed reaction is 3-O-(alpha-L-fucosyl)-L-seryl-[EGF-like domain protein] + UDP-N-acetyl-alpha-D-glucosamine = 3-O-(N-acetyl-beta-D-glucosaminyl-(1-&gt;3)-alpha-L-fucosyl)-L-seryl-[EGF-like domain protein] + UDP + H(+). Functionally, glycosyltransferase that initiates the elongation of O-linked fucose residues attached to EGF-like repeats in the extracellular domain of Notch molecules. Modulates NOTCH1 activity by modifying O-fucose residues at specific EGF-like domains resulting in inhibition of NOTCH1 activation by JAG1 and enhancement of NOTCH1 activation by DLL1 via an increase in its binding to DLL1. Decreases the binding of JAG1 to NOTCH2 but not that of DLL1. Essential mediator of somite segmentation and patterning. During somite boundary formation, it restricts Notch activity in the presomitic mesoderm to a boundary-forming territory in the posterior half of the prospective somite. In this region, Notch function activates a set of genes that are involved in boundary formation and in anterior-posterior somite identity. Ectopically expressed in the thymus, Lfgn inhibits Notch signaling which results in inhibition of T-cell commitment and promotes B-cell development in lymphoid progenitors. May play a role in boundary formation of the enamel knot. The polypeptide is Beta-1,3-N-acetylglucosaminyltransferase lunatic fringe (Mus musculus (Mouse)).